The sequence spans 380 residues: Putative 8-amino-7-oxononanoate synthase (380 aa).

Arg-18 is a substrate binding site. 106 to 107 serves as a coordination point for pyridoxal 5'-phosphate; it reads GY. His-131 is a binding site for substrate. Pyridoxal 5'-phosphate-binding positions include Ser-179, 205 to 208, and 236 to 239; these read DEAH and TFGK. Lys-239 is subject to N6-(pyridoxal phosphate)lysine. Position 352 (Thr-352) interacts with substrate.

It belongs to the class-II pyridoxal-phosphate-dependent aminotransferase family. BioF subfamily. Homodimer. It depends on pyridoxal 5'-phosphate as a cofactor.

It carries out the reaction 6-carboxyhexanoyl-[ACP] + L-alanine + H(+) = (8S)-8-amino-7-oxononanoate + holo-[ACP] + CO2. The protein operates within cofactor biosynthesis; biotin biosynthesis. In terms of biological role, catalyzes the decarboxylative condensation of pimeloyl-[acyl-carrier protein] and L-alanine to produce 8-amino-7-oxononanoate (AON), [acyl-carrier protein], and carbon dioxide. The polypeptide is Putative 8-amino-7-oxononanoate synthase (bioF) (Neisseria meningitidis serogroup B (strain ATCC BAA-335 / MC58)).